Consider the following 281-residue polypeptide: UPF0500 protein C1orf216 homolog (281 aa).

Positions 1–12 (MFTIQKPDTVSH) are enriched in polar residues. Residues 1–197 (MFTIQKPDTV…SSSDSDSISV (197 aa)) form a disordered region. Over residues 45–74 (TYDKNENWSQDKKGGEEGENKSKSEDEHSS) the composition is skewed to basic and acidic residues. 3 stretches are compositionally biased toward low complexity: residues 92 to 102 (STGSEGISLSS), 147 to 161 (SSSL…VSAS), and 169 to 178 (PAPTTTPQEN). Positions 179–190 (PETEDSDVESSS) are enriched in acidic residues. A coiled-coil region spans residues 198–257 (TLSEAFQSLQDKEKLKEREKEKHHAQLTMYRRLALLRWIRALQQKVRDQQNRLQESFDTI).

This sequence belongs to the UPF0500 family.

This Xenopus laevis (African clawed frog) protein is UPF0500 protein C1orf216 homolog.